The sequence spans 235 residues: Thiamine import ATP-binding protein ThiQ (235 aa).

Residues 2–230 form the ABC transporter domain; that stretch reads LKLIDITWLY…QASASALLGI (229 aa). Residue 32 to 39 participates in ATP binding; sequence GPSGAGKS.

Belongs to the ABC transporter superfamily. Thiamine importer (TC 3.A.1.19.1) family. The complex is composed of two ATP-binding proteins (ThiQ), two transmembrane proteins (ThiP) and a solute-binding protein (ThiB).

Its subcellular location is the cell inner membrane. The catalysed reaction is thiamine(out) + ATP + H2O = thiamine(in) + ADP + phosphate + H(+). In terms of biological role, part of the ABC transporter complex ThiBPQ involved in thiamine import. Responsible for energy coupling to the transport system. The protein is Thiamine import ATP-binding protein ThiQ of Salmonella paratyphi A (strain ATCC 9150 / SARB42).